Reading from the N-terminus, the 412-residue chain is Isovaleryl-CoA dehydrogenase, mitochondrial (412 aa).

The transit peptide at 1–25 (MHKLFVARSVKSALFRIKNHQKPQF) directs the protein to the mitochondrion. FAD-binding positions include 154–163 (LAMSEPNAGS) and 187–189 (WCT). Ser163 is a substrate binding site. Substrate-binding positions include 209–210 (SK), Tyr264, and 271–274 (DLER). The active-site Proton acceptor is the Glu273. Residues Arg299, Gln310, and 367–371 (QCLGG) each bind FAD. Residue 394–395 (AG) participates in substrate binding. Position 396 to 398 (396 to 398 (TSE)) interacts with FAD.

The protein belongs to the acyl-CoA dehydrogenase family. In terms of assembly, homotetramer. FAD is required as a cofactor. Expressed in flowers and tubers.

It localises to the mitochondrion. It catalyses the reaction 3-methylbutanoyl-CoA + oxidized [electron-transfer flavoprotein] + H(+) = 3-methylbut-2-enoyl-CoA + reduced [electron-transfer flavoprotein]. It functions in the pathway amino-acid degradation; L-leucine degradation; (S)-3-hydroxy-3-methylglutaryl-CoA from 3-isovaleryl-CoA: step 1/3. Its function is as follows. Involved in the catabolism of amino acids. Uses isovaleryl-CoA as substrate. Minor activity detected with 2-methylpalmitoyl-CoA or 2-methylbutanoyl-CoA, but no activity with short- and medium-straight chain acyl-CoA esters or with 2-methylhexanoyl-CoA. The polypeptide is Isovaleryl-CoA dehydrogenase, mitochondrial (IVD) (Solanum tuberosum (Potato)).